The chain runs to 207 residues: Superoxide dismutase [Mn] (207 aa).

Mn(2+) is bound by residues H28, H76, D160, and H164.

Belongs to the iron/manganese superoxide dismutase family. Mn(2+) is required as a cofactor.

The protein resides in the secreted. The catalysed reaction is 2 superoxide + 2 H(+) = H2O2 + O2. Functionally, destroys superoxide anion radicals which are normally produced within the cells and which are toxic to biological systems. The sequence is that of Superoxide dismutase [Mn] (sodA) from Mycolicibacterium paratuberculosis (strain ATCC BAA-968 / K-10) (Mycobacterium paratuberculosis).